Here is a 221-residue protein sequence, read N- to C-terminus: 7-cyano-7-deazaguanine synthase (221 aa).

L8–I18 provides a ligand contact to ATP. Zn(2+)-binding residues include C186, C196, C199, and C202.

The protein belongs to the QueC family. Zn(2+) serves as cofactor.

The catalysed reaction is 7-carboxy-7-deazaguanine + NH4(+) + ATP = 7-cyano-7-deazaguanine + ADP + phosphate + H2O + H(+). It functions in the pathway purine metabolism; 7-cyano-7-deazaguanine biosynthesis. Its function is as follows. Catalyzes the ATP-dependent conversion of 7-carboxy-7-deazaguanine (CDG) to 7-cyano-7-deazaguanine (preQ(0)). The polypeptide is 7-cyano-7-deazaguanine synthase (Stenotrophomonas maltophilia (strain R551-3)).